Consider the following 349-residue polypeptide: Small ribosomal subunit biogenesis GTPase RsgA (349 aa).

Basic residues predominate over residues 1 to 11 (MSKKKLSKGQQ). The tract at residues 1–35 (MSKKKLSKGQQRRVSANHQRRLKHADSKVEWDDSQ) is disordered. Positions 111 to 272 (YDGLKPIAAN…VIDSPGVREF (162 aa)) constitute a CP-type G domain. GTP is bound by residues 158 to 161 (NKID) and 212 to 220 (GQSGVGKSS). Positions 296, 301, 303, and 309 each coordinate Zn(2+).

The protein belongs to the TRAFAC class YlqF/YawG GTPase family. RsgA subfamily. Monomer. Associates with 30S ribosomal subunit, binds 16S rRNA. Zn(2+) is required as a cofactor.

The protein localises to the cytoplasm. In terms of biological role, one of several proteins that assist in the late maturation steps of the functional core of the 30S ribosomal subunit. Helps release RbfA from mature subunits. May play a role in the assembly of ribosomal proteins into the subunit. Circularly permuted GTPase that catalyzes slow GTP hydrolysis, GTPase activity is stimulated by the 30S ribosomal subunit. The protein is Small ribosomal subunit biogenesis GTPase RsgA of Dickeya dadantii (strain 3937) (Erwinia chrysanthemi (strain 3937)).